The sequence spans 176 residues: Macro domain-containing protein LMOf2365_2748 (176 aa).

Positions 1-175 constitute a Macro domain; the sequence is MEITVVKGDI…LYNKLINSEV (175 aa).

It belongs to the MacroD-type family.

This Listeria monocytogenes serotype 4b (strain F2365) protein is Macro domain-containing protein LMOf2365_2748.